A 145-amino-acid chain; its full sequence is Inner membrane protein YiaA (145 aa).

Residues 1–12 are Cytoplasmic-facing; sequence MDNKISTYSPAF. Residues 13–32 traverse the membrane as a helical segment; that stretch reads SIVSWIALVGGIVTYLLGLW. Over 33-41 the chain is Periplasmic; it reads NAEMQLNEK. Residues 42 to 59 traverse the membrane as a helical segment; sequence GYYFAVLVLGLFSAASYQ. Over 60–71 the chain is Cytoplasmic; the sequence is KTVRDKYEGIPT. Residues 72–94 form a helical membrane-spanning segment; that stretch reads TSIYYMTCLTVFIISVALLMVGL. At 95–98 the chain is on the periplasmic side; sequence WNAT. Residues 99-121 traverse the membrane as a helical segment; the sequence is LLLSEKGFYGLAFFLSLFGAVAV. Over 122–145 the chain is Cytoplasmic; the sequence is QKNIRDAGINPPKETQVTQEEYSE.

The protein resides in the cell inner membrane. The sequence is that of Inner membrane protein YiaA (yiaA) from Escherichia coli (strain K12).